Consider the following 306-residue polypeptide: Pantothenate kinase (306 aa).

Position 91-98 (G91–S98) interacts with ATP.

Belongs to the prokaryotic pantothenate kinase family.

It is found in the cytoplasm. The catalysed reaction is (R)-pantothenate + ATP = (R)-4'-phosphopantothenate + ADP + H(+). The protein operates within cofactor biosynthesis; coenzyme A biosynthesis; CoA from (R)-pantothenate: step 1/5. This chain is Pantothenate kinase (coaA), found in Streptococcus pneumoniae serotype 4 (strain ATCC BAA-334 / TIGR4).